Here is a 147-residue protein sequence, read N- to C-terminus: Transmembrane protein 210 (147 aa).

A signal peptide spans 1-31 (MAPCPQPESCPAGSPLGLICLSLLLIPASAG). Over 32 to 47 (TYCECSLGLSREALIA) the chain is Extracellular. A helical transmembrane segment spans residues 48–68 (LIVVLAGVSASCFCALVVVAI). Residues 69–147 (GVFRAKGDTC…PPPPPPPLPQ (79 aa)) lie on the Cytoplasmic side of the membrane. The interval 128-147 (TMTAPLEPPPPPPPPPPLPQ) is disordered. The segment covering 133 to 147 (LEPPPPPPPPPPLPQ) has biased composition (pro residues).

The protein resides in the membrane. It localises to the cytoplasmic vesicle. The protein localises to the secretory vesicle. Its subcellular location is the acrosome. The chain is Transmembrane protein 210 (Tmem210) from Mus musculus (Mouse).